Reading from the N-terminus, the 200-residue chain is Small ribosomal subunit protein uS4 (200 aa).

The disordered stretch occupies residues 21–42 (GTGKELQKRPYPPGQHGPGQRR). The S4 RNA-binding domain occupies 92–155 (SRLDNLVYRL…RNLQVIKEAI (64 aa)).

This sequence belongs to the universal ribosomal protein uS4 family. As to quaternary structure, part of the 30S ribosomal subunit. Contacts protein S5. The interaction surface between S4 and S5 is involved in control of translational fidelity.

In terms of biological role, one of the primary rRNA binding proteins, it binds directly to 16S rRNA where it nucleates assembly of the body of the 30S subunit. With S5 and S12 plays an important role in translational accuracy. This chain is Small ribosomal subunit protein uS4, found in Geobacillus thermodenitrificans (strain NG80-2).